Here is a 130-residue protein sequence, read N- to C-terminus: Secreted RxLR effector protein 68 (130 aa).

Residues 1-29 (MRCVCASIRRTRIIEFLMFFALSSSTASC) form the signal peptide. N-linked (GlcNAc...) asparagine glycosylation is present at Asn36. The RxLR motif lies at 45–48 (RWLR).

The protein belongs to the RxLR effector family.

The protein localises to the secreted. The protein resides in the host cytoplasm. It is found in the host nucleus. Functionally, effector that acts as a broad suppressor of cell death to interrupt plant immunity. Inhibits cell death induced by cell death-inducing proteins, including the PAMP elicitor INF1 from P.infestans. The protein is Secreted RxLR effector protein 68 of Plasmopara viticola (Downy mildew of grapevine).